A 541-amino-acid polypeptide reads, in one-letter code: Catalase (541 aa).

The segment at 1–20 (MPQTKGKPHEEQLEQYKNSQ) is disordered. Catalysis depends on residues histidine 74 and asparagine 147. Residue tyrosine 357 coordinates heme.

The protein belongs to the catalase family. The cofactor is heme.

Its subcellular location is the peroxisome matrix. It carries out the reaction 2 H2O2 = O2 + 2 H2O. In terms of biological role, catalyzes the degradation of hydrogen peroxide (H(2)O(2)) generated by peroxisomal oxidases to water and oxygen, thereby protecting cells from the toxic effects of hydrogen peroxide. The polypeptide is Catalase (CAT) (Ascaris suum (Pig roundworm)).